The chain runs to 62 residues: Large ribosomal subunit protein eL37 (62 aa).

Zn(2+) is bound by residues Cys-20, Cys-23, Cys-35, and Cys-38. A C4-type zinc finger spans residues 20–38 (CRRCGRHAFNVAKGYCAAC).

The protein belongs to the eukaryotic ribosomal protein eL37 family. It depends on Zn(2+) as a cofactor.

Binds to the 23S rRNA. In Staphylothermus marinus (strain ATCC 43588 / DSM 3639 / JCM 9404 / F1), this protein is Large ribosomal subunit protein eL37.